Reading from the N-terminus, the 254-residue chain is Ditrans,polycis-undecaprenyl-diphosphate synthase ((2E,6E)-farnesyl-diphosphate specific) (254 aa).

Residue Asp-25 is part of the active site. Residue Asp-25 coordinates Mg(2+). Substrate-binding positions include 26 to 29 (GNGR), Trp-30, Arg-38, His-42, and 70 to 72 (SSE). Asn-73 acts as the Proton acceptor in catalysis. Residues Trp-74, Arg-76, and Arg-193 each coordinate substrate. Residue His-198 participates in Mg(2+) binding. 199-201 (RIS) contributes to the substrate binding site. Glu-212 contacts Mg(2+).

The protein belongs to the UPP synthase family. As to quaternary structure, homodimer. The cofactor is Mg(2+).

The catalysed reaction is 8 isopentenyl diphosphate + (2E,6E)-farnesyl diphosphate = di-trans,octa-cis-undecaprenyl diphosphate + 8 diphosphate. Functionally, catalyzes the sequential condensation of isopentenyl diphosphate (IPP) with (2E,6E)-farnesyl diphosphate (E,E-FPP) to yield (2Z,6Z,10Z,14Z,18Z,22Z,26Z,30Z,34E,38E)-undecaprenyl diphosphate (di-trans,octa-cis-UPP). UPP is the precursor of glycosyl carrier lipid in the biosynthesis of bacterial cell wall polysaccharide components such as peptidoglycan and lipopolysaccharide. The chain is Ditrans,polycis-undecaprenyl-diphosphate synthase ((2E,6E)-farnesyl-diphosphate specific) from Photorhabdus laumondii subsp. laumondii (strain DSM 15139 / CIP 105565 / TT01) (Photorhabdus luminescens subsp. laumondii).